A 396-amino-acid polypeptide reads, in one-letter code: tRNA (guanine-N(7)-)-methyltransferase (396 aa).

Residues E125, E150, and D177 each contribute to the S-adenosyl-L-methionine site. Residues K203 and D233 each contribute to the substrate site.

It belongs to the class I-like SAM-binding methyltransferase superfamily. TrmB family.

It catalyses the reaction guanosine(46) in tRNA + S-adenosyl-L-methionine = N(7)-methylguanosine(46) in tRNA + S-adenosyl-L-homocysteine. The protein operates within tRNA modification; N(7)-methylguanine-tRNA biosynthesis. Its function is as follows. Catalyzes the formation of N(7)-methylguanine at position 46 (m7G46) in tRNA. The polypeptide is tRNA (guanine-N(7)-)-methyltransferase (Helicobacter hepaticus (strain ATCC 51449 / 3B1)).